The following is a 416-amino-acid chain: Homeobox protein ceh-62 (416 aa).

A compositionally biased stretch (low complexity) spans 103–113 (TPTPIIATPSI). Disordered regions lie at residues 103–144 (TPTP…QATR) and 178–247 (FQNR…FPPT). Residues 118–127 (QPLQSPSAPN) show a composition bias toward polar residues. Residues 130–189 (SRRKRTTFSPEQATRLEAEYIGDSYMAREKRHLLAQSLKLSENQVKTWFQNRRAKDKRDR) constitute a DNA-binding region (homeobox). The segment covering 193–218 (NASNHTSNSRRSSPSRKSSSDSTPTP) has biased composition (low complexity). Positions 219–240 (TQATQFDMPTQIQTASPPTTAD) are enriched in polar residues.

Its subcellular location is the nucleus. In Caenorhabditis elegans, this protein is Homeobox protein ceh-62.